Reading from the N-terminus, the 53-residue chain is Mannose/glucose-specific lectin alpha 2 chain (53 aa).

This sequence belongs to the leguminous lectin family. As to quaternary structure, tetramer of two alpha and two beta chains.

In Lathyrus ochrus (Cyprus-vetch), this protein is Mannose/glucose-specific lectin alpha 2 chain.